The primary structure comprises 201 residues: Cobalt-precorrin-7 C(5)-methyltransferase (201 aa).

It belongs to the precorrin methyltransferase family.

It carries out the reaction Co-precorrin-7 + S-adenosyl-L-methionine = Co-precorrin-8X + S-adenosyl-L-homocysteine + H(+). Its pathway is cofactor biosynthesis; adenosylcobalamin biosynthesis; cob(II)yrinate a,c-diamide from sirohydrochlorin (anaerobic route): step 8/10. Its function is as follows. Catalyzes the methylation of C-5 in cobalt-precorrin-7 to form cobalt-precorrin-8. This Salmonella typhi protein is Cobalt-precorrin-7 C(5)-methyltransferase (cbiE).